Reading from the N-terminus, the 407-residue chain is V-set and immunoglobulin domain-containing protein 1 (407 aa).

The signal sequence occupies residues M1–M22. Residues V23–L134 enclose the Ig-like V-type domain. Topologically, residues V23–E234 are extracellular. N-linked (GlcNAc...) asparagine glycosylation occurs at N39. 2 cysteine pairs are disulfide-bonded: C44–C118 and C163–C213. Residues P145–T229 enclose the Ig-like C2-type domain. Residues N202 and N221 are each glycosylated (N-linked (GlcNAc...) asparagine). Residues V235–V255 form a helical membrane-spanning segment. The Cytoplasmic portion of the chain corresponds to V256 to A407. Disordered regions lie at residues Q268–S289 and T318–A407. A phosphoserine mark is found at S273 and S274. Over residues D361–E371 the composition is skewed to acidic residues.

The protein localises to the membrane. This is V-set and immunoglobulin domain-containing protein 1 (Vsig1) from Mus musculus (Mouse).